A 428-amino-acid polypeptide reads, in one-letter code: Cytochrome c biogenesis protein CcsB (428 aa).

Transmembrane regions (helical) follow at residues 14 to 34, 72 to 92, and 162 to 182; these read LRFA…GTFI, SNWF…CSFR, and LGPI…AYGN.

This sequence belongs to the Ccs1/CcsB family. May interact with CcsA.

Its subcellular location is the cellular thylakoid membrane. Its function is as follows. Required during biogenesis of c-type cytochromes (cytochrome c6 and cytochrome f) at the step of heme attachment. The chain is Cytochrome c biogenesis protein CcsB from Prochlorococcus marinus subsp. pastoris (strain CCMP1986 / NIES-2087 / MED4).